A 651-amino-acid polypeptide reads, in one-letter code: Probable potassium transport system protein Kup (651 aa).

The next 12 helical transmembrane spans lie at 41–61, 82–102, 130–150, 163–183, 194–214, 235–255, 276–296, 309–329, 366–386, 395–415, 426–446, and 450–470; these read LVLG…IYAF, VVSL…VLFV, LILG…VITP, IVAP…LVTL, VAIV…ASGL, FLTV…LAMT, WLWI…AFIL, MIPS…TVIA, IYIP…VLGF, AYGI…YIVM, ALPI…ANII, and EGGW…WTWV.

It belongs to the HAK/KUP transporter (TC 2.A.72) family.

It localises to the cell inner membrane. It carries out the reaction K(+)(in) + H(+)(in) = K(+)(out) + H(+)(out). Its function is as follows. Transport of potassium into the cell. Likely operates as a K(+):H(+) symporter. The protein is Probable potassium transport system protein Kup of Brucella melitensis biotype 2 (strain ATCC 23457).